The sequence spans 187 residues: Adenylate kinase (187 aa).

ATP is bound at residue 11–16 (GAGKGT). Positions 31-60 (STGDILREAVKNQTAMGIEAKRYMDAGDLV) are NMP. Residues Thr32, Arg37, 58–60 (DLV), 86–89 (GFPR), and Gln93 contribute to the AMP site. Residues 127–137 (GRAEIEGRADD) are LID. Arg128 lines the ATP pocket. Residues Arg134 and Arg145 each contribute to the AMP site. Gly173 contacts ATP.

This sequence belongs to the adenylate kinase family. Monomer.

The protein resides in the cytoplasm. It carries out the reaction AMP + ATP = 2 ADP. The protein operates within purine metabolism; AMP biosynthesis via salvage pathway; AMP from ADP: step 1/1. Its function is as follows. Catalyzes the reversible transfer of the terminal phosphate group between ATP and AMP. Plays an important role in cellular energy homeostasis and in adenine nucleotide metabolism. In Leptospira interrogans serogroup Icterohaemorrhagiae serovar copenhageni (strain Fiocruz L1-130), this protein is Adenylate kinase.